The primary structure comprises 252 residues: Trans-aconitate 2-methyltransferase (252 aa).

The protein belongs to the methyltransferase superfamily. Tam family.

It localises to the cytoplasm. The enzyme catalyses trans-aconitate + S-adenosyl-L-methionine = (E)-3-(methoxycarbonyl)pent-2-enedioate + S-adenosyl-L-homocysteine. Its function is as follows. Catalyzes the S-adenosylmethionine monomethyl esterification of trans-aconitate. The sequence is that of Trans-aconitate 2-methyltransferase from Escherichia coli O7:K1 (strain IAI39 / ExPEC).